Reading from the N-terminus, the 104-residue chain is MTYHEMYRSTTLGTTLREALDEMLAHNLLQPGMDHKVMQKFDQCISNALAKRVKNRLSLRGHLNTYRNCDNVWTLVMNDVEIKDSSAIMTVDKVSLNSPLICKI.

This sequence belongs to the TFIIA subunit 2 family. As to quaternary structure, TFIIA is a heterodimer of the large unprocessed subunit 1 and a small subunit gamma.

It localises to the nucleus. In terms of biological role, TFIIA is a component of the transcription machinery of RNA polymerase II and plays an important role in transcriptional activation. TFIIA in a complex with TBP mediates transcriptional activity. In Schistosoma mansoni (Blood fluke), this protein is Transcription initiation factor IIA subunit 2.